A 382-amino-acid polypeptide reads, in one-letter code: UDP-N-acetylglucosamine--N-acetylmuramyl-(pentapeptide) pyrophosphoryl-undecaprenol N-acetylglucosamine transferase (382 aa).

UDP-N-acetyl-alpha-D-glucosamine is bound by residues 11 to 13 (TGG), Asn-117, Arg-160, Ser-209, and Gln-311.

Belongs to the glycosyltransferase 28 family. MurG subfamily.

It localises to the cell inner membrane. The catalysed reaction is di-trans,octa-cis-undecaprenyl diphospho-N-acetyl-alpha-D-muramoyl-L-alanyl-D-glutamyl-meso-2,6-diaminopimeloyl-D-alanyl-D-alanine + UDP-N-acetyl-alpha-D-glucosamine = di-trans,octa-cis-undecaprenyl diphospho-[N-acetyl-alpha-D-glucosaminyl-(1-&gt;4)]-N-acetyl-alpha-D-muramoyl-L-alanyl-D-glutamyl-meso-2,6-diaminopimeloyl-D-alanyl-D-alanine + UDP + H(+). It functions in the pathway cell wall biogenesis; peptidoglycan biosynthesis. Cell wall formation. Catalyzes the transfer of a GlcNAc subunit on undecaprenyl-pyrophosphoryl-MurNAc-pentapeptide (lipid intermediate I) to form undecaprenyl-pyrophosphoryl-MurNAc-(pentapeptide)GlcNAc (lipid intermediate II). This is UDP-N-acetylglucosamine--N-acetylmuramyl-(pentapeptide) pyrophosphoryl-undecaprenol N-acetylglucosamine transferase from Rickettsia akari (strain Hartford).